Here is a 159-residue protein sequence, read N- to C-terminus: Large ribosomal subunit protein mL50 (159 aa).

The protein belongs to the mitochondrion-specific ribosomal protein mL50 family. In terms of assembly, component of the mitochondrial ribosome large subunit (39S) which comprises a 16S rRNA and about 50 distinct proteins.

It is found in the mitochondrion. The sequence is that of Large ribosomal subunit protein mL50 (Mrpl50) from Mus musculus (Mouse).